A 303-amino-acid polypeptide reads, in one-letter code: Elongation factor Ts (303 aa).

The interval 80-83 (TDFV) is involved in Mg(2+) ion dislocation from EF-Tu.

It belongs to the EF-Ts family.

It localises to the cytoplasm. Functionally, associates with the EF-Tu.GDP complex and induces the exchange of GDP to GTP. It remains bound to the aminoacyl-tRNA.EF-Tu.GTP complex up to the GTP hydrolysis stage on the ribosome. The protein is Elongation factor Ts of Clostridium botulinum (strain Eklund 17B / Type B).